Reading from the N-terminus, the 258-residue chain is UPF0246 protein YaaA (258 aa).

It belongs to the UPF0246 family.

This is UPF0246 protein YaaA from Shigella sonnei (strain Ss046).